The chain runs to 331 residues: Ketol-acid reductoisomerase (NADP(+)) (331 aa).

The KARI N-terminal Rossmann domain occupies 3–183 (AQMYYDDDAD…GGTRAGALKT (181 aa)). NADP(+)-binding positions include 26–29 (YGSQ), Ser52, and Ser54. His109 is an active-site residue. Gly135 lines the NADP(+) pocket. Residues 184–329 (TFKEETETDL…TELRSLMSWL (146 aa)) form the KARI C-terminal knotted domain. Positions 192, 196, 228, and 232 each coordinate Mg(2+). A substrate-binding site is contributed by Ser253.

Belongs to the ketol-acid reductoisomerase family. It depends on Mg(2+) as a cofactor.

It carries out the reaction (2R)-2,3-dihydroxy-3-methylbutanoate + NADP(+) = (2S)-2-acetolactate + NADPH + H(+). The enzyme catalyses (2R,3R)-2,3-dihydroxy-3-methylpentanoate + NADP(+) = (S)-2-ethyl-2-hydroxy-3-oxobutanoate + NADPH + H(+). The protein operates within amino-acid biosynthesis; L-isoleucine biosynthesis; L-isoleucine from 2-oxobutanoate: step 2/4. It participates in amino-acid biosynthesis; L-valine biosynthesis; L-valine from pyruvate: step 2/4. Involved in the biosynthesis of branched-chain amino acids (BCAA). Catalyzes an alkyl-migration followed by a ketol-acid reduction of (S)-2-acetolactate (S2AL) to yield (R)-2,3-dihydroxy-isovalerate. In the isomerase reaction, S2AL is rearranged via a Mg-dependent methyl migration to produce 3-hydroxy-3-methyl-2-ketobutyrate (HMKB). In the reductase reaction, this 2-ketoacid undergoes a metal-dependent reduction by NADPH to yield (R)-2,3-dihydroxy-isovalerate. The polypeptide is Ketol-acid reductoisomerase (NADP(+)) (Thermobifida fusca (strain YX)).